Consider the following 99-residue polypeptide: Large ribosomal subunit protein uL23 (99 aa).

This sequence belongs to the universal ribosomal protein uL23 family. As to quaternary structure, part of the 50S ribosomal subunit. Contacts protein L29, and trigger factor when it is bound to the ribosome.

Its function is as follows. One of the early assembly proteins it binds 23S rRNA. One of the proteins that surrounds the polypeptide exit tunnel on the outside of the ribosome. Forms the main docking site for trigger factor binding to the ribosome. The polypeptide is Large ribosomal subunit protein uL23 (Shewanella woodyi (strain ATCC 51908 / MS32)).